We begin with the raw amino-acid sequence, 905 residues long: Protein translocase subunit SecA (905 aa).

ATP is bound by residues Gln87, 105 to 109 (GEGKT), and Asp509. 4 residues coordinate Zn(2+): Cys890, Cys892, Cys901, and His902.

Belongs to the SecA family. In terms of assembly, monomer and homodimer. Part of the essential Sec protein translocation apparatus which comprises SecA, SecYEG and auxiliary proteins SecDF-YajC and YidC. It depends on Zn(2+) as a cofactor.

It is found in the cell inner membrane. Its subcellular location is the cytoplasm. The catalysed reaction is ATP + H2O + cellular proteinSide 1 = ADP + phosphate + cellular proteinSide 2.. Part of the Sec protein translocase complex. Interacts with the SecYEG preprotein conducting channel. Has a central role in coupling the hydrolysis of ATP to the transfer of proteins into and across the cell membrane, serving both as a receptor for the preprotein-SecB complex and as an ATP-driven molecular motor driving the stepwise translocation of polypeptide chains across the membrane. The protein is Protein translocase subunit SecA of Acinetobacter baylyi (strain ATCC 33305 / BD413 / ADP1).